The sequence spans 512 residues: Anaerobic nitric oxide reductase transcription regulator NorR (512 aa).

The 230-residue stretch at 190–419 (MIGESLAMQE…LEHVISRAAV (230 aa)) folds into the Sigma-54 factor interaction domain. ATP-binding positions include 218–225 (GETGVGKE) and 281–290 (ADNGTLFLDE). The segment at residues 487–506 (WAATARALQLDTGNLHRLAK) is a DNA-binding region (H-T-H motif).

It participates in nitrogen metabolism; nitric oxide reduction. Functionally, required for the expression of anaerobic nitric oxide (NO) reductase, acts as a transcriptional activator for at least the norVW operon. Activation also requires sigma-54. The protein is Anaerobic nitric oxide reductase transcription regulator NorR of Aliivibrio fischeri (strain ATCC 700601 / ES114) (Vibrio fischeri).